The following is a 364-amino-acid chain: MMEKNKRVLLGMSGGTDSSVAAMLLLEAGYEVTGVTFRFYEFNGSTEYLEDARALAARLGIGHITYDARKVFQEQIIDYFIDEYMSGHTPVPCTLCNNQLKWPLLAKIADEMGIFYLATGHYVRKQWVDGNYYIAPAEDVDKDQSFFLWGLRQEILQRMLLPMGGMTKSEARAYAAGRGFEKVSKKKDSIGVCFCPLDYRSFLKKCLCDESGDKNRNIYRKVERGRFLDESGNFIAWHEGYPFYTIGQRRGLGIQLNRAVFVKEIHPETNEVVLASLKSLEKSEMWLKDWNIVDESRLLGCDDVIVKIRYRKQENHCSVTITPEGLLHIRLHEPLSAIAEGQAAAFYKDGLLLGGGIITMSDQR.

Residues 11–18 (GMSGGTDS) and F37 contribute to the ATP site. The active-site Nucleophile is the C96. C96 and C193 are joined by a disulfide. Position 120 (G120) interacts with ATP. The interaction with tRNA stretch occupies residues 142–144 (KDQ). C193 (cysteine persulfide intermediate) is an active-site residue. Residues 309–310 (RY) form an interaction with tRNA region.

Belongs to the MnmA/TRMU family.

Its subcellular location is the cytoplasm. It carries out the reaction S-sulfanyl-L-cysteinyl-[protein] + uridine(34) in tRNA + AH2 + ATP = 2-thiouridine(34) in tRNA + L-cysteinyl-[protein] + A + AMP + diphosphate + H(+). Its function is as follows. Catalyzes the 2-thiolation of uridine at the wobble position (U34) of tRNA, leading to the formation of s(2)U34. The polypeptide is tRNA-specific 2-thiouridylase MnmA 1 (Bacteroides fragilis (strain YCH46)).